The chain runs to 80 residues: Cell division protein ZapB (80 aa).

The stretch at 3-80 (FEVFEKLEAK…ALLGKMNEVN (78 aa)) forms a coiled coil.

The protein belongs to the ZapB family. As to quaternary structure, homodimer. The ends of the coiled-coil dimer bind to each other, forming polymers. Interacts with FtsZ.

The protein resides in the cytoplasm. Non-essential, abundant cell division factor that is required for proper Z-ring formation. It is recruited early to the divisome by direct interaction with FtsZ, stimulating Z-ring assembly and thereby promoting cell division earlier in the cell cycle. Its recruitment to the Z-ring requires functional FtsA or ZipA. The protein is Cell division protein ZapB of Edwardsiella ictaluri (strain 93-146).